Reading from the N-terminus, the 271-residue chain is Ribonuclease HII (271 aa).

The RNase H type-2 domain maps to 84–271; sequence VLIAGVDEVG…HRMSFLSNYI (188 aa). A divalent metal cation is bound by residues Asp-90, Glu-91, and Asp-187.

This sequence belongs to the RNase HII family. Requires Mn(2+) as cofactor. It depends on Mg(2+) as a cofactor.

It localises to the cytoplasm. It catalyses the reaction Endonucleolytic cleavage to 5'-phosphomonoester.. Functionally, endonuclease that specifically degrades the RNA of RNA-DNA hybrids. In Clostridium tetani (strain Massachusetts / E88), this protein is Ribonuclease HII.